Reading from the N-terminus, the 2175-residue chain is Non-reducing polyketide synthase PKS1 (2175 aa).

The N-terminal acylcarrier protein transacylase domain (SAT) stretch occupies residues 5–242 (LLFGDQTAEQ…VSIPIYGPYH (238 aa)). One can recognise a Ketosynthase family 3 (KS3) domain in the interval 369 to 801 (TDKIAIVGMA…GGNTALLIED (433 aa)). Residues Cys-541, His-676, and His-719 each act as for beta-ketoacyl synthase activity in the active site. The malonyl-CoA:ACP transacylase (MAT) domain stretch occupies residues 900 to 1212 (FCFTGQGSQY…ISTSICHLFT (313 aa)). Ser-988 functions as the For acyl/malonyl transferase activity in the catalytic mechanism. A product template (PT) domain region spans residues 1285-1604 (STSCQNVISE…RKVLNVFLPP (320 aa)). Residues 1289-1424 (QNVISEEFDG…CTIRYEDKAV (136 aa)) are N-terminal hotdog fold. Residues 1289 to 1599 (QNVISEEFDG…FQQIPRKVLN (311 aa)) enclose the PKS/mFAS DH domain. Catalysis depends on His-1321, which acts as the Proton acceptor; for dehydratase activity. Positions 1452-1599 (AHKVQRGMAY…FQQIPRKVLN (148 aa)) are C-terminal hotdog fold. Catalysis depends on Asp-1512, which acts as the Proton donor; for dehydratase activity. A disordered region spans residues 1640–1664 (PVRKSAGPAKAAAAPSMPKPSKVAA). Residues 1643–1664 (KSAGPAKAAAAPSMPKPSKVAA) show a composition bias toward low complexity. The Carrier 1 domain occupies 1666-1743 (KPAGSMVDKV…EMKKYFSQFN (78 aa)). Ser-1703 is subject to O-(pantetheine 4'-phosphoryl)serine. The segment at 1766-1804 (ATPFDEMSTPASSAPSVPQSDAGKPSPDSPTGDSLSDDV) is disordered. Positions 1774-1784 (TPASSAPSVPQ) are enriched in polar residues. The region spanning 1801-1878 (SDDVGDVSIA…DIENALGMRP (78 aa)) is the Carrier 2 domain. Ser-1838 is subject to O-(pantetheine 4'-phosphoryl)serine. The interval 1879–1899 (KPKAVGPKLSKPSTKTDMNEV) is disordered. Residues 1889-1899 (KPSTKTDMNEV) are compositionally biased toward polar residues. Positions 1932–2158 (KVFFLPDGSG…GHHFSMMKDP (227 aa)) are claisen cyclase domain. The active-site For Claisen cyclase activity is Ser-2002.

Pantetheine 4'-phosphate is required as a cofactor.

The enzyme catalyses 6 malonyl-CoA + acetyl-CoA + 6 H(+) = naphtopyrone YWA1 + 6 CO2 + 7 CoA + H2O. It functions in the pathway pigment biosynthesis; melanin biosynthesis. Non-reducing polyketide synthase; part of the gene cluster 29 that mediates the biosynthesis of mediates the biosynthesis of dihydroxynaphthalene (DHN)-melanin, a bluish-green pigment and a structural component of the conidial wall. The first step of the pathway is the production of the heptaketide naphtopyrone YWA1 by the polyketide synthase PKS1 though condensation of acetyl-CoA with malonyl-CoA. This is Non-reducing polyketide synthase PKS1 from Zymoseptoria tritici (strain CBS 115943 / IPO323) (Speckled leaf blotch fungus).